A 245-amino-acid chain; its full sequence is MRVGVLGAKGKVGATMVQAVEAADDLTFTTGVDAGDPLSALVDTRTDVVIDFTHPSVVMDNLKFLIDNGIHAVVGTTGFTDERISQVQDWLADKPESAVLIAPNFAIGAVLSMHFAQQAARFFESVEVIELHHPHKADAPSGTAARTAKLIAAARKDMPPNPDATSTGLEGARGADVDGIPVHSIRLAGLVAHQEVLFGTQGETLTIRHDSLDRTSFVPGVLLAVRKVSERPGLTVGIEPLLDLT.

NAD(+)-binding positions include 7-12 (GAKGKV), 75-77 (GTT), and 102-105 (APNF). The Proton donor/acceptor role is filled by H132. H133 provides a ligand contact to (S)-2,3,4,5-tetrahydrodipicolinate. K136 functions as the Proton donor in the catalytic mechanism. 142-143 (GT) lines the (S)-2,3,4,5-tetrahydrodipicolinate pocket.

It belongs to the DapB family.

The protein resides in the cytoplasm. It carries out the reaction (S)-2,3,4,5-tetrahydrodipicolinate + NAD(+) + H2O = (2S,4S)-4-hydroxy-2,3,4,5-tetrahydrodipicolinate + NADH + H(+). The catalysed reaction is (S)-2,3,4,5-tetrahydrodipicolinate + NADP(+) + H2O = (2S,4S)-4-hydroxy-2,3,4,5-tetrahydrodipicolinate + NADPH + H(+). It functions in the pathway amino-acid biosynthesis; L-lysine biosynthesis via DAP pathway; (S)-tetrahydrodipicolinate from L-aspartate: step 4/4. In terms of biological role, catalyzes the conversion of 4-hydroxy-tetrahydrodipicolinate (HTPA) to tetrahydrodipicolinate. The sequence is that of 4-hydroxy-tetrahydrodipicolinate reductase from Mycobacterium sp. (strain KMS).